The sequence spans 134 residues: T-cell receptor alpha chain V region RL-5 (134 aa).

An N-terminal signal peptide occupies residues 1–20; the sequence is MFSASCSVTVVVLLITVRRT. The tract at residues 21–114 is v segment; the sequence is NGASVTQTEG…DSAVYYCALR (94 aa). The j segment stretch occupies residues 115-134; it reads RGASNKLTLGTGTLLKVELN. The N-linked (GlcNAc...) asparagine glycan is linked to Asn-134.

Rearrangement with the C region would elongate the sequence with Ile-Thr-; which creates a potential N-glycosylation site at Asn-134.

The chain is T-cell receptor alpha chain V region RL-5 from Oryctolagus cuniculus (Rabbit).